Reading from the N-terminus, the 1342-residue chain is DNA-directed RNA polymerase subunit beta (1342 aa).

The protein belongs to the RNA polymerase beta chain family. In terms of assembly, the RNAP catalytic core consists of 2 alpha, 1 beta, 1 beta' and 1 omega subunit. When a sigma factor is associated with the core the holoenzyme is formed, which can initiate transcription.

It carries out the reaction RNA(n) + a ribonucleoside 5'-triphosphate = RNA(n+1) + diphosphate. In terms of biological role, DNA-dependent RNA polymerase catalyzes the transcription of DNA into RNA using the four ribonucleoside triphosphates as substrates. This Blochmanniella floridana protein is DNA-directed RNA polymerase subunit beta.